A 277-amino-acid polypeptide reads, in one-letter code: Probable ketoamine kinase HMPREF0351_12196 (277 aa).

84 to 86 (EWI) lines the ATP pocket. Asp-186 acts as the Proton acceptor in catalysis.

It belongs to the fructosamine kinase family.

The catalysed reaction is N(6)-(D-ribulosyl)-L-lysine + ATP = N(6)-(3-O-phospho-D-ribulosyl)-L-lysine + ADP + H(+). The enzyme catalyses N-(D-ribulosyl)-cadaverine + ATP = N-(3-O-phospho-D-ribulosyl)-cadaverine + ADP + H(+). It catalyses the reaction N(6)-(D-erythrulosyl)-L-lysine + ATP = N(6)-(3-O-phospho-D-erythrulosyl)-L-lysine + ADP + H(+). It carries out the reaction N-(D-erythrulosyl)-cadaverine + ATP = N-(3-O-phospho-D-erythrulosyl)-cadaverine + ADP + H(+). The catalysed reaction is N(6)-D-ribulosyl-L-lysyl-[protein] + ATP = N(6)-(3-O-phospho-D-ribulosyl)-L-lysyl-[protein] + ADP + H(+). The enzyme catalyses N(6)-(D-erythrulosyl)-L-lysyl-[protein] + ATP = N(6)-(3-O-phospho-D-erythrulosyl)-L-lysyl-[protein] + ADP + H(+). Its function is as follows. Ketoamine kinase that phosphorylates ketoamines, such as erythruloselysine, erythrulosecadaverine, ribuloselysine and ribulosecadaverine, on the third carbon of the sugar moiety to generate ketoamine 3-phosphate. Has higher activity on free lysine (erythruloselysine and ribuloselysine), than on ribuloselysine and erythruloselysine residues on glycated proteins. This chain is Probable ketoamine kinase HMPREF0351_12196, found in Enterococcus faecium (strain ATCC BAA-472 / TX0016 / DO).